The chain runs to 431 residues: Pheromone alpha factor receptor (431 aa).

Residues 1–49 (MSDAAPSLSNLFYDPTYNPGQSTINYTSIYGNGSTITFDELQGLVNSTV) lie on the Extracellular side of the membrane. 2 N-linked (GlcNAc...) asparagine glycosylation sites follow: N25 and N32. The helical transmembrane segment at 50-72 (TQAIMFGVRCGAAALTLIVMWMT) threads the bilayer. A Glycine zipper motif motif is present at residues 53 to 61 (IMFGVRCGA). Topologically, residues 73–78 (SRSRKT) are cytoplasmic. The chain crosses the membrane as a helical span at residues 79 to 102 (PIFIINQVSLFLIILHSALYFKYL). Over 103–132 (LSNYSSVTYALTGFPQFISRGDVHVYGATN) the chain is Extracellular. Residues 133–156 (IIQVLLVASIETSLVFQIKVIFTG) traverse the membrane as a helical segment. Residues 157–163 (DNFKRIG) lie on the Cytoplasmic side of the membrane. The chain crosses the membrane as a helical span at residues 164-188 (LMLTSISFTLGIATVTMYFVSAVKG). Residues 189 to 205 (MIVTYNDVSATQDKYFN) lie on the Extracellular side of the membrane. Residues 206-230 (ASTILLASSINFMSFVLVVKLILAI) form a helical membrane-spanning segment. Residues 231 to 241 (RSRRFLGLKQF) lie on the Cytoplasmic side of the membrane. The helical transmembrane segment at 242 to 266 (DSFHILLIMSCQSLLVPSIIFILAY) threads the bilayer. Residues 267–275 (SLKPNQGTD) are Extracellular-facing. Residues 276 to 299 (VLTTVATLLAVLSLPLSSMWATAA) form a helical membrane-spanning segment. Residues 300 to 431 (NNASKTNTIT…KFWTEDNNNL (132 aa)) lie on the Cytoplasmic side of the membrane. A phosphoserine mark is found at S310 and S315. Phosphothreonine is present on T329. Phosphoserine is present on S331. A Glycyl lysine isopeptide (Lys-Gly) (interchain with G-Cter in ubiquitin) cross-link involves residue K337. S360 is modified (phosphoserine). Phosphothreonine is present on T363. The residue at position 366 (S366) is a Phosphoserine. Residue K374 forms a Glycyl lysine isopeptide (Lys-Gly) (interchain with G-Cter in ubiquitin) linkage. Polar residues predominate over residues 379–389 (QLPTPTSSKNT). The segment at 379 to 406 (QLPTPTSSKNTRIGPFADASYKEGEVEP) is disordered. Residue T382 is modified to Phosphothreonine. Phosphoserine is present on residues S385 and S386. Residue K400 forms a Glycyl lysine isopeptide (Lys-Gly) (interchain with G-Cter in ubiquitin) linkage. Residues T411 and T414 each carry the phosphothreonine modification. K422 is covalently cross-linked (Glycyl lysine isopeptide (Lys-Gly) (interchain with G-Cter in ubiquitin)).

The protein belongs to the G-protein coupled receptor 4 family. As to quaternary structure, homodimer. Might also for higher order homooligomers such as homotetramers. Oligomerization is mediated significantly by transmembrane domain 1 (TMD1), possibly in concert with the N-terminal extracellular domain and TMD2. Interaction with GPA1, its dedicated G-alpha protein. Undergoes hyperphosphorylation of the C-terminal cytoplasmic domain after binding of the alpha-factor, which leads to internalization by endocytosis. In terms of processing, monoubiquitination at Lys-337 triggers internalization of STE2. Post-translationally, N-glycosylated. N-glycosylation may be involved in the sorting process for misfolded STE2 protein. As to expression, expressed in MATa strains but not in MATalpha strains.

The protein resides in the cell membrane. Its function is as follows. Fungal class D1 G-protein-coupled receptor that acts as an alpha-factor pheromone receptor performing pheromone-dependent signal transduction involved in cellular conjugation, mating projection assembly, and in cell fusion. Following alpha-factor-binding, the signal is transmitted via a tripartite G protein consisting of alpha-, beta- and gamma-subunits (GAP1, STE4 and STE8 respectively) that prepares the cell for conjugation. In the inactive state, the cytoplasmic end of transmembrane domain 7 (TMD7) is unstructured and packs between TMD1-6, blocking the G protein coupling site. Agonist binding results in the outward movement of the extracellular ends of TMD6 and TMD7 by 6 Angstroms. On the intracellular surface, the G protein coupling site is formed by a 20 Angstroms outward movement of the unstructured region in TMD7 that unblocks the site, and a 12 Angstroms inward movement of TMD6. This Saccharomyces cerevisiae (strain ATCC 204508 / S288c) (Baker's yeast) protein is Pheromone alpha factor receptor (STE2).